The following is a 752-amino-acid chain: Double zinc ribbon and ankyrin repeat-containing protein 1 (752 aa).

2 DZANK-type zinc fingers span residues 210–270 and 338–386; these read CPKC…VVCE and CSKC…GGCG. Basic and acidic residues predominate over residues 448 to 469; the sequence is KKRSQQREAELSRQEQMRDRKP. 2 disordered regions span residues 448–471 and 536–614; these read KKRSQQREAELSRQEQMRDRKPLL and PPEE…VGPE. Residues 536–554 show a composition bias toward low complexity; that stretch reads PPEESRSSSAGQRSRSVTS. The span at 555-580 shows a compositional bias: polar residues; sequence ESQNLSSVTEGRNSASPENNINTTGS. Positions 600–614 are enriched in basic and acidic residues; that stretch reads PESKDSLLLKEVGPE. ANK repeat units follow at residues 638 to 667, 672 to 703, and 707 to 737; these read DGRPALVAAVLNGHHDVIPVLVQREADVNQ, LKNTALHEAAALGDEGLKSVEILLGCNASIRK, and RGQTPYDIAVAAGSSSVLSLMAAHLGQGLLL.

It is found in the cytoplasm. Its subcellular location is the cytoskeleton. It localises to the microtubule organizing center. The protein localises to the centrosome. The protein resides in the cilium basal body. Functionally, required for the intracellular transport of organelles and vesicles, and is essential for the photoreceptor's outer segments formation, maintenance and function. In Danio rerio (Zebrafish), this protein is Double zinc ribbon and ankyrin repeat-containing protein 1 (dzank1).